The following is a 662-amino-acid chain: DNA ligase (662 aa).

Residues 34–38 (DYEYD), 83–84 (SI), and Glu113 contribute to the NAD(+) site. Lys115 functions as the N6-AMP-lysine intermediate in the catalytic mechanism. Residues Arg136, Glu172, Lys286, and Lys310 each coordinate NAD(+). Positions 404, 407, 422, and 427 each coordinate Zn(2+). The 80-residue stretch at 583 to 662 (KSGSTCFGKA…EAFTNLIHLE (80 aa)) folds into the BRCT domain.

The protein belongs to the NAD-dependent DNA ligase family. LigA subfamily. The cofactor is Mg(2+). Requires Mn(2+) as cofactor.

The catalysed reaction is NAD(+) + (deoxyribonucleotide)n-3'-hydroxyl + 5'-phospho-(deoxyribonucleotide)m = (deoxyribonucleotide)n+m + AMP + beta-nicotinamide D-nucleotide.. Functionally, DNA ligase that catalyzes the formation of phosphodiester linkages between 5'-phosphoryl and 3'-hydroxyl groups in double-stranded DNA using NAD as a coenzyme and as the energy source for the reaction. It is essential for DNA replication and repair of damaged DNA. In Chlamydia pneumoniae (Chlamydophila pneumoniae), this protein is DNA ligase.